A 67-amino-acid polypeptide reads, in one-letter code: Conotoxin Cal14.2c (67 aa).

An N-terminal signal peptide occupies residues M1–G20. Positions F21–Q48 are excised as a propeptide.

This sequence belongs to the conotoxin L superfamily. In terms of processing, contains 2 disulfide bonds. In terms of tissue distribution, expressed by the venom duct.

It localises to the secreted. In terms of biological role, probable neurotoxin with unknown target. Possibly targets ion channels. The sequence is that of Conotoxin Cal14.2c from Californiconus californicus (California cone).